The chain runs to 597 residues: Spastin (597 aa).

Over 1-20 the chain is Cytoplasmic; the sequence is MPNNDILRPLAIPAKYVGSF. An intramembrane region (helical) is located at residues 21–37; sequence LVFLYNGLYFVFVVNLW. The Cytoplasmic portion of the chain corresponds to 38–597; the sequence is SRLFGKATKT…DWNRLYGSNA (560 aa). Positions 56–80 are disordered; the sequence is RKLGKDMASRAPPRRGQSSEDNEDG. One can recognise an MIT domain in the interval 91–168; the sequence is HHKQAYAYIA…ENTRERMDEL (78 aa). The disordered stretch occupies residues 193–289; the sequence is SARKTSSEPS…PAMMAKQSCV (97 aa). A compositionally biased stretch (polar residues) spans 214-231; sequence SYKQSKSYKNSTTVTTKR. A compositionally biased stretch (low complexity) spans 232–252; that stretch reads SQASPSFSSSSSSVNSTAGSS.

Belongs to the AAA ATPase family. Spastin subfamily. Homohexamer. The homohexamer is stabilized by ATP-binding. The homohexamer may adopt a ring conformation through which microtubules pass prior to being severed. Interacts with microtubules.

It is found in the membrane. The protein localises to the cytoplasm. The protein resides in the cytoskeleton. Its subcellular location is the microtubule organizing center. It localises to the centrosome. The catalysed reaction is n ATP + n H2O + a microtubule = n ADP + n phosphate + (n+1) alpha/beta tubulin heterodimers.. Functionally, ATP-dependent microtubule severing protein. Microtubule severing may promote reorganization of cellular microtubule arrays and the release of microtubules from the microtubule organizing center following nucleation. The polypeptide is Spastin (Nematostella vectensis (Starlet sea anemone)).